We begin with the raw amino-acid sequence, 212 residues long: Phosphoribosyl-dephospho-CoA transferase (212 aa).

Catalysis depends on residues D139 and D141.

This sequence belongs to the MdcG family.

The enzyme catalyses apo-[malonate decarboxylase ACP] + 2'-(5''-triphospho-alpha-D-ribosyl)-3'-dephospho-CoA = holo-[malonate decarboxylase ACP] + diphosphate. Functionally, transfers 2'-(5-triphosphoribosyl)-3'-dephosphocoenzyme-A to the apo-[acyl-carrier-protein] of the malonate decarboxylase to yield holo-[acyl-carrier-protein]. This Azotobacter vinelandii (strain DJ / ATCC BAA-1303) protein is Phosphoribosyl-dephospho-CoA transferase.